A 780-amino-acid polypeptide reads, in one-letter code: uncharacterized protein (780 aa).

The BTB domain maps to asparagine 10–tyrosine 80.

This is an uncharacterized protein from Dictyostelium discoideum (Social amoeba).